Here is an 89-residue protein sequence, read N- to C-terminus: Small ribosomal subunit protein uS15 (89 aa).

Positions M1–G16 are enriched in basic and acidic residues. Residues M1–S24 are disordered.

It belongs to the universal ribosomal protein uS15 family. In terms of assembly, part of the 30S ribosomal subunit. Forms a bridge to the 50S subunit in the 70S ribosome, contacting the 23S rRNA.

In terms of biological role, one of the primary rRNA binding proteins, it binds directly to 16S rRNA where it helps nucleate assembly of the platform of the 30S subunit by binding and bridging several RNA helices of the 16S rRNA. Functionally, forms an intersubunit bridge (bridge B4) with the 23S rRNA of the 50S subunit in the ribosome. This is Small ribosomal subunit protein uS15 from Ralstonia pickettii (strain 12J).